Here is a 72-residue protein sequence, read N- to C-terminus: Holocyclotoxin-1 (72 aa).

Residues 1-22 (MSKVTTVFIGALVLLLLIENGF) form the signal peptide. 4 disulfides stabilise this stretch: cysteine 24/cysteine 40, cysteine 32/cysteine 57, cysteine 36/cysteine 60, and cysteine 42/cysteine 70.

In terms of tissue distribution, expressed in salivary glands.

Its subcellular location is the secreted. Probable neurotoxin. This is Holocyclotoxin-1 from Ixodes holocyclus (Australian paralysis tick).